A 550-amino-acid polypeptide reads, in one-letter code: Methionine--tRNA ligase (550 aa).

Residues 10 to 22 (LPYPNNSSPHLGN) carry the 'HIGH' region motif. The 'KMSKS' region signature appears at 336–340 (KFSKS). Position 339 (Lys-339) interacts with ATP.

This sequence belongs to the class-I aminoacyl-tRNA synthetase family.

The catalysed reaction is tRNA(Met) + L-methionine + ATP = L-methionyl-tRNA(Met) + AMP + diphosphate. The sequence is that of Methionine--tRNA ligase (MARS) from Acanthamoeba polyphaga mimivirus (APMV).